The following is a 305-amino-acid chain: Oxygen-dependent coproporphyrinogen-III oxidase (305 aa).

S98 provides a ligand contact to substrate. A divalent metal cation is bound by residues H102 and H112. H112 acts as the Proton donor in catalysis. 114–116 (NVR) contributes to the substrate binding site. A divalent metal cation is bound by residues H151 and H181. Residues 246 to 281 (YVEFNLVYDRGTLFGLQSGGRTESILMSMPPLARWE) form an important for dimerization region. 264 to 266 (GGR) is a binding site for substrate.

The protein belongs to the aerobic coproporphyrinogen-III oxidase family. As to quaternary structure, homodimer. A divalent metal cation is required as a cofactor.

It localises to the cytoplasm. It catalyses the reaction coproporphyrinogen III + O2 + 2 H(+) = protoporphyrinogen IX + 2 CO2 + 2 H2O. The protein operates within porphyrin-containing compound metabolism; protoporphyrin-IX biosynthesis; protoporphyrinogen-IX from coproporphyrinogen-III (O2 route): step 1/1. In terms of biological role, involved in the heme biosynthesis. Catalyzes the aerobic oxidative decarboxylation of propionate groups of rings A and B of coproporphyrinogen-III to yield the vinyl groups in protoporphyrinogen-IX. In Vibrio atlanticus (strain LGP32) (Vibrio splendidus (strain Mel32)), this protein is Oxygen-dependent coproporphyrinogen-III oxidase.